The sequence spans 611 residues: Chaperone protein DnaK (611 aa).

Residue Thr-173 is modified to Phosphothreonine; by autocatalysis. Over residues 579–592 the composition is skewed to low complexity; sequence AAGQAEGAQGAQDA. Positions 579–598 are disordered; the sequence is AAGQAEGAQGAQDAGAKKDN.

The protein belongs to the heat shock protein 70 family.

Its function is as follows. Acts as a chaperone. In Bacillus cereus (strain B4264), this protein is Chaperone protein DnaK.